Consider the following 545-residue polypeptide: Thermosome subunit alpha (545 aa).

The protein belongs to the TCP-1 chaperonin family. Forms a Heterooligomeric complex of two stacked eight-membered rings.

Functionally, molecular chaperone; binds unfolded polypeptides in vitro, and has a weak ATPase activity. The polypeptide is Thermosome subunit alpha (thsA) (Archaeoglobus fulgidus (strain ATCC 49558 / DSM 4304 / JCM 9628 / NBRC 100126 / VC-16)).